A 439-amino-acid chain; its full sequence is CBL-interacting serine/threonine-protein kinase 20 (439 aa).

In terms of domain architecture, Protein kinase spans 12–266; the sequence is YELGRLLGQG…IEKIMENSWF (255 aa). ATP is bound by residues 18–26 and Lys-41; that span reads LGQGTFAKV. The active-site Proton acceptor is the Asp-134. The segment at 152-181 is activation loop; the sequence is DFGLSALRESKQQDGLLHTTCGTPAYVAPE. Ser-156 is subject to Phosphoserine. Residue Thr-170 is modified to Phosphothreonine. The region spanning 297-322 is the NAF domain; the sequence is VKPMSYNAFDLISSLSQGFDLSGLFE. Positions 326–356 are PPI; the sequence is RSESKFTTKKDAKEIVSKFEEIATSSERFNL.

It belongs to the protein kinase superfamily. CAMK Ser/Thr protein kinase family. SNF1 subfamily. Requires Mn(2+) as cofactor. Autophosphorylated. Confined to mature leaves.

It carries out the reaction L-seryl-[protein] + ATP = O-phospho-L-seryl-[protein] + ADP + H(+). The enzyme catalyses L-threonyl-[protein] + ATP = O-phospho-L-threonyl-[protein] + ADP + H(+). Its function is as follows. CIPK serine-threonine protein kinases interact with CBL proteins. Binding of a CBL protein to the regulatory NAF domain of CIPK protein lead to the activation of the kinase in a calcium-dependent manner. Required for the abscisic acid-mediated (ABA) signaling pathway involved in seed germination and growth elongation inhibition. This chain is CBL-interacting serine/threonine-protein kinase 20 (CIPK20), found in Arabidopsis thaliana (Mouse-ear cress).